A 1042-amino-acid chain; its full sequence is Sarcoplasmic/endoplasmic reticulum calcium ATPase 2 (1042 aa).

The Cytoplasmic portion of the chain corresponds to 1-48 (MENAHTKTVEEVLGHFGVNESTGLSLEQVKKLKERWGSNELPAEEGKT). Serine 38 carries the phosphoserine modification. A helical transmembrane segment spans residues 49 to 69 (LLELVIEQFEDLLVRILLLAA). The Lumenal portion of the chain corresponds to 70–89 (CISFVLAWFEEGEETITAFV). A helical transmembrane segment spans residues 90-110 (EPFVILLILVANAIVGVWQER). Residues 111 to 253 (NAENAIEALK…QERTPLQQKL (143 aa)) lie on the Cytoplasmic side of the membrane. A helical transmembrane segment spans residues 254–273 (DEFGEQLSKVISLICIAVWI). Over 274-295 (INIGHFNDPVHGGSWIRGAIYY) the chain is Lumenal. A 3'-nitrotyrosine mark is found at tyrosine 294 and tyrosine 295. A helical membrane pass occupies residues 296–313 (FKIAVALAVAAIPEGLPA). Ca(2+) is bound by residues valine 304, alanine 305, isoleucine 307, and glutamate 309. The Cytoplasmic portion of the chain corresponds to 314–756 (VITTCLALGT…EEGRAIYNNM (443 aa)). The 4-aspartylphosphate intermediate role is filled by aspartate 351. Aspartate 351 and threonine 353 together coordinate Mg(2+). ATP is bound at residue threonine 353. Threonine 441 carries the phosphothreonine modification. ATP-binding residues include glutamate 442, arginine 489, and lysine 514. Serine 531 is subject to Phosphoserine. ATP is bound at residue arginine 559. The segment at 575-594 (MNLEDSANFIKYETNLTFVG) is interaction with HAX1. Serine 580 is subject to Phosphoserine. Residues threonine 624, glycine 625, and aspartate 626 each contribute to the ATP site. Serine 663 carries the post-translational modification Phosphoserine. ATP contacts are provided by arginine 677 and lysine 683. Mg(2+) is bound at residue aspartate 702. ATP is bound at residue asparagine 705. The helical transmembrane segment at 757 to 776 (KQFIRYLISSNVGEVVCIFL) threads the bilayer. Positions 767 and 770 each coordinate Ca(2+). Over 777-786 (TAALGFPEAL) the chain is Lumenal. Residues 787-807 (IPVQLLWVNLVTDGLPATALG) traverse the membrane as a helical segment. An interaction with PLN region spans residues 787–807 (IPVQLLWVNLVTDGLPATALG). Residues 788–1042 (PVQLLWVNLV…DTNFSDMFWS (255 aa)) are interaction with TMEM64 and PDIA3. Asparagine 795, threonine 798, and aspartate 799 together coordinate Ca(2+). The Cytoplasmic segment spans residues 808 to 827 (FNPPDLDIMNKPPRNPKEPL). Residues 828–850 (ISGWLFFRYLAIGCYVGAATVGA) form a helical membrane-spanning segment. Over 851–896 (AAWWFIAADGGPRVTFYQLSHFLQCKEDNPDFEGVDCAVFESPYPM) the chain is Lumenal. Cysteine 875 and cysteine 887 are disulfide-bonded. Residues 897-916 (TMALSVLVTIEMCNALNSLS) form a helical membrane-spanning segment. Residue glutamate 907 participates in Ca(2+) binding. Topologically, residues 917–929 (ENQSLLRMPPWEN) are cytoplasmic. The helical transmembrane segment at 930–948 (IWLVGSICLSMSLHFLILY) threads the bilayer. Residues 931–942 (WLVGSICLSMSL) form an interaction with PLN region. At 949 to 963 (VEPLPLIFQITPLNL) the chain is on the lumenal side. The helical transmembrane segment at 964–984 (TQWLMVLKISLPVILMDETLK) threads the bilayer. At 985 to 1042 (FVARNYLEPGKECVQPATKSCSFSACTDGISWPFVLLIMPLVIWVYSTDTNFSDMFWS) the chain is on the cytoplasmic side.

This sequence belongs to the cation transport ATPase (P-type) (TC 3.A.3) family. Type IIA subfamily. In terms of assembly, interacts with sarcolipin (SLN); the interaction inhibits ATP2A2 Ca(2+) affinity. Interacts with phospholamban (PLN); the interaction inhibits ATP2A2 Ca(2+) affinity. Interacts with myoregulin (MRLN). Interacts with ARLN and ERLN; the interactions inhibit ATP2A2 Ca(2+) affinity. Interacts with STRIT1/DWORF; the interaction results in activation of ATP2A2. Interacts with the monomeric forms of SLN, PLN, ARLN, ERLN and STRI1/DWORF. Interacts with HAX1. Interacts with S100A8 and S100A9. Interacts with SLC35G1 and STIM1. Interacts with TMEM203. Interacts with TMEM64 and PDIA3. Interacts with TMX1. Interacts with TMX2. Interacts with VMP1; VMP1 competes with PLN and SLN to prevent them from forming an inhibitory complex with ATP2A2. Interacts with ULK1. Interacts with S100A1 in a Ca(2+)-dependent manner. Interacts with TUNAR. Interacts with FLVCR2; this interaction occurs in the absence of heme and promotes ATP2A2 proteasomal degradation; this complex is dissociated upon heme binding. Interacts with FNIP1. Interacts with TRAM2 (via C-terminus). Requires Mg(2+) as cofactor. Post-translationally, nitrated under oxidative stress. Nitration on the two tyrosine residues inhibits catalytic activity. In terms of processing, serotonylated on Gln residues by TGM2 in response to hypoxia, leading to its inactivation. In terms of tissue distribution, detected in heart left ventricle (at protein level). Isoform 2 is highly expressed in heart and slow twitch skeletal muscle. Isoform 1 is widely expressed.

It localises to the endoplasmic reticulum membrane. The protein localises to the sarcoplasmic reticulum membrane. The enzyme catalyses Ca(2+)(in) + ATP + H2O = Ca(2+)(out) + ADP + phosphate + H(+). With respect to regulation, has different conformational states with differential Ca2+ affinity. The E1 conformational state (active form) shows high Ca(2+) affinity, while the E2 state exhibits low Ca(2+) affinity. Binding of ATP allosterically increases its affinity for subsequent binding of Ca2+. Reversibly inhibited by phospholamban (PLN) at low calcium concentrations. PLN inhibits ATP2A2 Ca(2+) affinity by disrupting its allosteric activation by ATP. Inhibited by sarcolipin (SLN) and myoregulin (MRLN). The inhibition is blocked by VMP1. Enhanced by STRIT1/DWORF; STRIT1 increases activity by displacing sarcolipin (SLN), phospholamban (PLN) and myoregulin (MRLN). Stabilizes SERCA2 in its E2 state. In terms of biological role, this magnesium-dependent enzyme catalyzes the hydrolysis of ATP coupled with the translocation of calcium from the cytosol to the sarcoplasmic reticulum lumen. Involved in autophagy in response to starvation. Upon interaction with VMP1 and activation, controls ER-isolation membrane contacts for autophagosome formation. Also modulates ER contacts with lipid droplets, mitochondria and endosomes. In coordination with FLVCR2 mediates heme-stimulated switching from mitochondrial ATP synthesis to thermogenesis. Involved in the regulation of the contraction/relaxation cycle. Acts as a regulator of TNFSF11-mediated Ca(2+) signaling pathways via its interaction with TMEM64 which is critical for the TNFSF11-induced CREB1 activation and mitochondrial ROS generation necessary for proper osteoclast generation. Association between TMEM64 and SERCA2 in the ER leads to cytosolic Ca(2+) spiking for activation of NFATC1 and production of mitochondrial ROS, thereby triggering Ca(2+) signaling cascades that promote osteoclast differentiation and activation. In Sus scrofa (Pig), this protein is Sarcoplasmic/endoplasmic reticulum calcium ATPase 2 (ATP2A2).